The chain runs to 507 residues: ATP synthase subunit alpha, chloroplastic (507 aa).

Residue 170–177 coordinates ATP; sequence GDRQTGKT. Disordered regions lie at residues 278–325, 392–430, and 452–471; these read PRRP…TQAG, EPEA…APLP, and GQVQ…NKPE. The span at 282 to 303 shows a compositional bias: basic and acidic residues; sequence PGREAHPGDVPHLHPRPPERAA. Polar residues predominate over residues 305–322; sequence LSSQPGEGSTTASPTVET.

The protein belongs to the ATPase alpha/beta chains family. F-type ATPases have 2 components, CF(1) - the catalytic core - and CF(0) - the membrane proton channel. CF(1) has five subunits: alpha(3), beta(3), gamma(1), delta(1), epsilon(1). CF(0) has four main subunits: a, b, b' and c.

Its subcellular location is the plastid. It localises to the chloroplast thylakoid membrane. It catalyses the reaction ATP + H2O + 4 H(+)(in) = ADP + phosphate + 5 H(+)(out). Its function is as follows. Produces ATP from ADP in the presence of a proton gradient across the membrane. The alpha chain is a regulatory subunit. This is ATP synthase subunit alpha, chloroplastic from Selaginella uncinata (Blue spike-moss).